We begin with the raw amino-acid sequence, 594 residues long: Putative phospholipase B-like 2 (594 aa).

The signal sequence occupies residues 1–46; that stretch reads MAAPVDGSSGGWAARALRRALALTSLTTLALLASLTGLLLSGPAGA. Residues Asn93 and Asn115 are each glycosylated (N-linked (GlcNAc...) asparagine). Cys147 and Cys157 are oxidised to a cystine. Asn236 and Asn441 each carry an N-linked (GlcNAc...) asparagine glycan. Cys497 and Cys500 are oxidised to a cystine. The N-linked (GlcNAc...) asparagine glycan is linked to Asn520.

It belongs to the phospholipase B-like family. Interacts with IGF2R. In terms of processing, the p76 protein is synthesized as a 76 kDa precursor which is then processed into a N-terminal 28 kDa form and a C-terminal 40 kDa form. The C-terminal peptide is further processed into a 15 kDa form. Post-translationally, glycosylated; contains mannose 6-phosphate sugars. Present at highest levels in spleen, lung and brain (at protein level).

The protein resides in the lysosome lumen. Functionally, putative phospholipase. The chain is Putative phospholipase B-like 2 (Plbd2) from Mus musculus (Mouse).